The chain runs to 555 residues: (+)-delta-cadinene synthase isozyme A (555 aa).

The segment at Met-1–Pro-22 is disordered. Positions 308, 312, 452, and 456 each coordinate Mg(2+). The DDXXD motif motif lies at Asp-308–Asp-312.

Belongs to the terpene synthase family. It depends on Mg(2+) as a cofactor.

The catalysed reaction is (2E,6E)-farnesyl diphosphate = (1S,8aR)-delta-cadinene + diphosphate. It participates in secondary metabolite biosynthesis; terpenoid biosynthesis. Its function is as follows. Responsible for the cyclization of trans,trans-farnesyl diphosphate (FPP) to (+)-delta cadinene. This Gossypium arboreum (Tree cotton) protein is (+)-delta-cadinene synthase isozyme A (CAD1-A).